The following is a 581-amino-acid chain: Multicopper oxidase LPR1 (581 aa).

A signal peptide spans 1 to 28 (MESLLCRRRIKRVMVLIIALTWLRSTCG). 4 residues coordinate Cu cation: His148, His150, His196, and His198. 4 N-linked (GlcNAc...) asparagine glycosylation sites follow: Asn254, Asn298, Asn386, and Asn458. One can recognise a Plastocyanin-like domain in the interval 283-352 (PRLNVRRRKY…DVVVDFYKSP (70 aa)). 3 residues coordinate Cu cation: His464, His467, and His469. Asn546 is a glycosylation site (N-linked (GlcNAc...) asparagine). Cu cation is bound by residues His562, Cys563, His564, His568, and Met573.

This sequence belongs to the multicopper oxidase family. It depends on Cu cation as a cofactor.

It localises to the endoplasmic reticulum membrane. Its function is as follows. Multicopper oxidase that may be involved in copper homeostasis and oxidative stress response, and that is necessary for root growth inhibition by low phosphate conditions. Functions together with LPR2 and PDR2 in a common pathway that adjusts root meristem activity to phosphate availability. Oxidizes the substrate 2,2'-azinobis-(3-ethylbenzthiazoline-6-sulphonate) in vitro. This chain is Multicopper oxidase LPR1 (LPR1), found in Arabidopsis thaliana (Mouse-ear cress).